The sequence spans 333 residues: Holliday junction branch migration complex subunit RuvB (333 aa).

The interval 1-182 (MDERLLSGES…FGVLSRLEYY (182 aa)) is large ATPase domain (RuvB-L). ATP-binding positions include leucine 21, arginine 22, glycine 63, lysine 66, threonine 67, threonine 68, 129–131 (EDF), arginine 172, tyrosine 182, and arginine 219. Threonine 67 is a binding site for Mg(2+). The interval 183–253 (TVDQLSAIVE…ITQMALELLQ (71 aa)) is small ATPAse domain (RuvB-S). Residues 256 to 333 (KLGLDHIDHK…EHFGMEIPKV (78 aa)) are head domain (RuvB-H). The DNA site is built by arginine 311 and arginine 316.

Belongs to the RuvB family. In terms of assembly, homohexamer. Forms an RuvA(8)-RuvB(12)-Holliday junction (HJ) complex. HJ DNA is sandwiched between 2 RuvA tetramers; dsDNA enters through RuvA and exits via RuvB. An RuvB hexamer assembles on each DNA strand where it exits the tetramer. Each RuvB hexamer is contacted by two RuvA subunits (via domain III) on 2 adjacent RuvB subunits; this complex drives branch migration. In the full resolvosome a probable DNA-RuvA(4)-RuvB(12)-RuvC(2) complex forms which resolves the HJ.

The protein localises to the cytoplasm. It carries out the reaction ATP + H2O = ADP + phosphate + H(+). In terms of biological role, the RuvA-RuvB-RuvC complex processes Holliday junction (HJ) DNA during genetic recombination and DNA repair, while the RuvA-RuvB complex plays an important role in the rescue of blocked DNA replication forks via replication fork reversal (RFR). RuvA specifically binds to HJ cruciform DNA, conferring on it an open structure. The RuvB hexamer acts as an ATP-dependent pump, pulling dsDNA into and through the RuvAB complex. RuvB forms 2 homohexamers on either side of HJ DNA bound by 1 or 2 RuvA tetramers; 4 subunits per hexamer contact DNA at a time. Coordinated motions by a converter formed by DNA-disengaged RuvB subunits stimulates ATP hydrolysis and nucleotide exchange. Immobilization of the converter enables RuvB to convert the ATP-contained energy into a lever motion, pulling 2 nucleotides of DNA out of the RuvA tetramer per ATP hydrolyzed, thus driving DNA branch migration. The RuvB motors rotate together with the DNA substrate, which together with the progressing nucleotide cycle form the mechanistic basis for DNA recombination by continuous HJ branch migration. Branch migration allows RuvC to scan DNA until it finds its consensus sequence, where it cleaves and resolves cruciform DNA. In Bacillus cereus (strain B4264), this protein is Holliday junction branch migration complex subunit RuvB.